A 455-amino-acid polypeptide reads, in one-letter code: Glutamate--tRNA ligase (455 aa).

A 'HIGH' region motif is present at residues 8 to 18; the sequence is PSPTGYLHIGG. Residues 231 to 235 carry the 'KMSKS' region motif; it reads RLSKR. Residue Lys234 coordinates ATP.

It belongs to the class-I aminoacyl-tRNA synthetase family. Glutamate--tRNA ligase type 1 subfamily. Monomer.

It localises to the cytoplasm. It carries out the reaction tRNA(Glu) + L-glutamate + ATP = L-glutamyl-tRNA(Glu) + AMP + diphosphate. In terms of biological role, catalyzes the attachment of glutamate to tRNA(Glu) in a two-step reaction: glutamate is first activated by ATP to form Glu-AMP and then transferred to the acceptor end of tRNA(Glu). The sequence is that of Glutamate--tRNA ligase from Vesicomyosocius okutanii subsp. Calyptogena okutanii (strain HA).